The sequence spans 525 residues: ATP synthase subunit beta, mitochondrial (525 aa).

The N-terminal 44 residues, Met1 to Tyr44, are a transit peptide targeting the mitochondrion. Gly203–Thr210 serves as a coordination point for ATP.

Belongs to the ATPase alpha/beta chains family. In terms of assembly, F-type ATPases have 2 components, CF(1) - the catalytic core - and CF(0) - the membrane proton channel. CF(1) has five subunits: alpha(3), beta(3), gamma(1), delta(1), epsilon(1). CF(0) has three main subunits: a, b and c.

It localises to the mitochondrion. Its subcellular location is the mitochondrion inner membrane. The enzyme catalyses ATP + H2O + 4 H(+)(in) = ADP + phosphate + 5 H(+)(out). Functionally, mitochondrial membrane ATP synthase (F(1)F(0) ATP synthase or Complex V) produces ATP from ADP in the presence of a proton gradient across the membrane which is generated by electron transport complexes of the respiratory chain. F-type ATPases consist of two structural domains, F(1) - containing the extramembraneous catalytic core, and F(0) - containing the membrane proton channel, linked together by a central stalk and a peripheral stalk. During catalysis, ATP synthesis in the catalytic domain of F(1) is coupled via a rotary mechanism of the central stalk subunits to proton translocation. Subunits alpha and beta form the catalytic core in F(1). Rotation of the central stalk against the surrounding alpha(3)beta(3) subunits leads to hydrolysis of ATP in three separate catalytic sites on the beta subunits. The sequence is that of ATP synthase subunit beta, mitochondrial (atp2) from Schizosaccharomyces pombe (strain 972 / ATCC 24843) (Fission yeast).